The sequence spans 811 residues: Phosphoinositide 3-kinase adapter protein 1 (811 aa).

Residues 8–146 (RGCDILIFYS…AVRKAISEDS (139 aa)) enclose the TIR domain. Residues 10–145 (CDILIFYSPD…AAVRKAISED (136 aa)) form a necessary and sufficient to mediate inhibition of NF-kappa-B downstream of activated TLRs; may mediate interaction with MYD88 and TIRAP region. The segment at 146-169 (SGCDSVTDTEPEDERELPFSKQTN) is disordered. Residues 182–318 (VQPDRIRCGA…NIPASGLHLF (137 aa)) form the DBB domain. Phosphotyrosine is present on Tyr-264. Phosphotyrosine; by SYK occurs at positions 420, 445, and 460. A Phosphotyrosine; by ABL1 modification is found at Tyr-513. Residues 525 to 551 (DLANRPPVPVPRPEASAPGPPPPPDNE) are disordered. Positions 530–550 (PPVPVPRPEASAPGPPPPPDN) are enriched in pro residues. 3 positions are modified to phosphotyrosine; by ABL1: Tyr-553, Tyr-570, and Tyr-594. A Phosphoserine modification is found at Ser-642. Tyr-694 bears the Phosphotyrosine; by ABL1 mark. A disordered region spans residues 702–811 (VLPARTELRR…PPPPVPPRGR (110 aa)). Over residues 707-716 (TELRRGDWKT) the composition is skewed to basic and acidic residues. Over residues 717–740 (DSMSSTASSTSNRSSTRSLLSVSS) the composition is skewed to low complexity. Ser-718 is modified (phosphoserine). Positions 801–811 (HPPPPVPPRGR) are enriched in pro residues.

In terms of assembly, homooligomer. Interacts (phosphorylated on tyrosine residues within YXXM motifs) with PIK3R1 (via SH2 domain); required for BCR- and TLR-mediated activation of phosphoinositide 3-kinase. Interacts (via polyproline C-terminal region) with ABI1 (via SH3 domain); the interaction promotes phosphorylation of PIK3AP1 by ABL1. May interact with MYD88 and TIRAP. Post-translationally, constitutively phosphorylated. Phosphorylated on tyrosine residues in C-terminal region by ABL1. Phosphorylated on tyrosine residues within the YXXM motifs by BTK and SYK. Isoform 1 and isoform 2 are phosphorylated on tyrosine residues, most likely within the YXXM motifs, via CD19 activation. Toll-like receptor activation induces appearance of a phosphorylated form associated with membranes. In terms of tissue distribution, predominantly expressed in spleen (at protein level). Expressed at lower levels in thymus, liver and lung. Expressed in B-cells, macrophages and natural killer (NK) cells.

The protein resides in the cytoplasm. Its subcellular location is the cell membrane. Functionally, signaling adapter that contributes to B-cell development by linking B-cell receptor (BCR) signaling to the phosphoinositide 3-kinase (PI3K)-Akt signaling pathway. Has a complementary role to the BCR coreceptor CD19, coupling BCR and PI3K activation by providing a docking site for the PI3K subunit PIK3R1. Alternatively, links Toll-like receptor (TLR) signaling to PI3K activation, a process preventing excessive inflammatory cytokine production. Also involved in the activation of PI3K in natural killer cells. May be involved in the survival of mature B-cells via activation of REL. In Mus musculus (Mouse), this protein is Phosphoinositide 3-kinase adapter protein 1 (Pik3ap1).